The chain runs to 537 residues: O-phosphoserine--tRNA(Cys) ligase (537 aa).

Residues 186–188 (HMT), 231–233 (SAS), 273–274 (YY), and asparagine 317 contribute to the substrate site.

Belongs to the class-II aminoacyl-tRNA synthetase family. O-phosphoseryl-tRNA(Cys) synthetase subfamily. In terms of assembly, homotetramer. Interacts with SepCysS.

It carries out the reaction tRNA(Cys) + O-phospho-L-serine + ATP = O-phospho-L-seryl-tRNA(Cys) + AMP + diphosphate. Catalyzes the attachment of O-phosphoserine (Sep) to tRNA(Cys). This chain is O-phosphoserine--tRNA(Cys) ligase, found in Methanococcus maripaludis (strain C5 / ATCC BAA-1333).